Consider the following 455-residue polypeptide: Venom prothrombin activator hopsarin-D (455 aa).

The first 20 residues, 1-20 (MAPQLLLCLILTFLWSVPEA), serve as a signal peptide directing secretion. Residues 21–40 (ESNVFLKSKVANRFLQRTKR) constitute a propeptide that is removed on maturation. The Gla domain occupies 41-86 (SNSLFEEIRPGNIERECIEEKCSKEEAREVFEDNEKTETFWNVYVD). Residues glutamate 46, glutamate 47, glutamate 54, glutamate 56, glutamate 59, glutamate 60, glutamate 65, glutamate 66, glutamate 69, glutamate 72, and glutamate 75 each carry the 4-carboxyglutamate modification. Cysteines 57 and 62 form a disulfide. One can recognise an EGF-like 1; calcium-binding domain in the interval 86–121 (DGDQCSSNPCHYHGTCKDGIGSYTCTCLPNYEGKNC). Disulfide bonds link cysteine 90/cysteine 101, cysteine 95/cysteine 110, cysteine 112/cysteine 121, cysteine 129/cysteine 140, cysteine 136/cysteine 149, cysteine 151/cysteine 164, cysteine 172/cysteine 328, cysteine 236/cysteine 252, cysteine 376/cysteine 390, and cysteine 401/cysteine 429. A glycan (O-linked (Hex...) serine) is linked at serine 92. The region spanning 129-164 (CRAFNGNCWHFCKRVQSETQCSCAESYRLGVDGHSC) is the EGF-like 2 domain. Residues 182-209 (REASLPDFVQSQKATLLKKSDNPSPDIR) constitute a propeptide, activation peptide. Residues 210-453 (IVNGMDSKLG…FIPWIKKIMS (244 aa)) form the Peptidase S1 domain. The Charge relay system role is filled by histidine 251. Asparagine 254 is a glycosylation site (N-linked (GlcNAc...) asparagine). Catalysis depends on aspartate 308, which acts as the Charge relay system. Residue serine 405 is the Charge relay system of the active site.

Belongs to the peptidase S1 family. Snake venom subfamily. Heterodimer of a light chain and a heavy chain; disulfide-linked. Post-translationally, the vitamin K-dependent, enzymatic carboxylation of some glutamate residues allows the modified protein to bind calcium. In terms of tissue distribution, expressed by the venom gland.

The protein resides in the secreted. It catalyses the reaction Selective cleavage of Arg-|-Thr and then Arg-|-Ile bonds in prothrombin to form thrombin.. Snake prothrombin activator that attacks the hemostatic system of prey. This protein is functionally similar to blood coagulation factor Xa. The procoagulant activity of hopsarin-D is approximately 10-fold lower than that of trocarin-D and FXa. The protein is Venom prothrombin activator hopsarin-D of Hoplocephalus stephensii (Stephens's banded snake).